The sequence spans 76 residues: Omega-conotoxin-like TxO1 (76 aa).

The signal sequence occupies residues Met-1–Ala-22. Residues Asp-23–Glu-50 constitute a propeptide that is removed on maturation. 3 cysteine pairs are disulfide-bonded: Cys-52-Cys-67, Cys-59-Cys-70, and Cys-66-Cys-75.

Belongs to the conotoxin O1 superfamily. Expressed by the venom duct.

It is found in the secreted. Omega-conotoxins act at presynaptic membranes, they bind and block voltage-gated calcium channels (Cav). This chain is Omega-conotoxin-like TxO1, found in Conus textile (Cloth-of-gold cone).